The chain runs to 299 residues: Recombination-associated protein RdgC (299 aa).

Belongs to the RdgC family.

It is found in the cytoplasm. The protein localises to the nucleoid. May be involved in recombination. The polypeptide is Recombination-associated protein RdgC (Neisseria meningitidis serogroup C (strain 053442)).